The chain runs to 217 residues: Lipid A acyltransferase PagP (217 aa).

Residues 1–24 (MYLKRILITLSLITLPIVPCLSYA) form the signal peptide. Catalysis depends on residues His-89, Asp-132, and Ser-133.

The protein belongs to the lipid A palmitoyltransferase family. As to quaternary structure, homodimer.

Its subcellular location is the cell outer membrane. It catalyses the reaction a lipid A + a 1,2-diacyl-sn-glycero-3-phosphocholine = a hepta-acyl lipid A + a 2-acyl-sn-glycero-3-phosphocholine. The enzyme catalyses a lipid IVA + a 1,2-diacyl-sn-glycero-3-phosphocholine = a lipid IVB + a 2-acyl-sn-glycero-3-phosphocholine. It carries out the reaction a lipid IIA + a 1,2-diacyl-sn-glycero-3-phosphocholine = a lipid IIB + a 2-acyl-sn-glycero-3-phosphocholine. Transfers a fatty acid residue from the sn-1 position of a phospholipid to the N-linked hydroxyfatty acid chain on the proximal unit of lipid A or its precursors. The protein is Lipid A acyltransferase PagP of Pectobacterium atrosepticum (strain SCRI 1043 / ATCC BAA-672) (Erwinia carotovora subsp. atroseptica).